The sequence spans 737 residues: Cellulose synthase-like protein E1 (737 aa).

2 helical membrane-spanning segments follow: residues 26 to 45 and 58 to 78; these read AVYRVQAATVAAGILLVLYY and AAWLGMAAAELWFAVYWVIAQ. Residues D146 and D451 contribute to the active site. 5 helical membrane passes run 528–548, 551–571, 654–674, 683–703, and 716–736; these read LWAANSLPTLYYVVIPSLGLV, TPLFPQIMSPWATPFIYVFCV, VIIATVALLNFVCLVGGLSQI, WNVFLPQAILCGMIVIINMPI, and IPTAVTLASIGFVMLAFLVPI.

It belongs to the glycosyltransferase 2 family. Plant cellulose synthase-like E subfamily.

The protein localises to the golgi apparatus membrane. Thought to be a Golgi-localized beta-glycan synthase that polymerize the backbones of noncellulosic polysaccharides (hemicelluloses) of plant cell wall. This is Cellulose synthase-like protein E1 (CSLE1) from Oryza sativa subsp. japonica (Rice).